The chain runs to 791 residues: Phenylalanine--tRNA ligase beta subunit (791 aa).

The tRNA-binding domain occupies 39 to 148 (AADFSGVVVA…ADAPVGADIR (110 aa)). The 76-residue stretch at 401 to 476 (PLRAPVRLRE…RVYGYDAIPR (76 aa)) folds into the B5 domain. Residues D454, D460, E463, and E464 each coordinate Mg(2+). Positions 697–790 (SRFPLVRRDL…LAADFGAKLR (94 aa)) constitute an FDX-ACB domain.

Belongs to the phenylalanyl-tRNA synthetase beta subunit family. Type 1 subfamily. Tetramer of two alpha and two beta subunits. The cofactor is Mg(2+).

It is found in the cytoplasm. It catalyses the reaction tRNA(Phe) + L-phenylalanine + ATP = L-phenylalanyl-tRNA(Phe) + AMP + diphosphate + H(+). This Methylococcus capsulatus (strain ATCC 33009 / NCIMB 11132 / Bath) protein is Phenylalanine--tRNA ligase beta subunit.